The primary structure comprises 248 residues: Ubiquinone biosynthesis O-methyltransferase (248 aa).

S-adenosyl-L-methionine contacts are provided by R41, G72, D93, and M136.

This sequence belongs to the methyltransferase superfamily. UbiG/COQ3 family.

The enzyme catalyses a 3-demethylubiquinol + S-adenosyl-L-methionine = a ubiquinol + S-adenosyl-L-homocysteine + H(+). It carries out the reaction a 3-(all-trans-polyprenyl)benzene-1,2-diol + S-adenosyl-L-methionine = a 2-methoxy-6-(all-trans-polyprenyl)phenol + S-adenosyl-L-homocysteine + H(+). It participates in cofactor biosynthesis; ubiquinone biosynthesis. Its function is as follows. O-methyltransferase that catalyzes the 2 O-methylation steps in the ubiquinone biosynthetic pathway. The protein is Ubiquinone biosynthesis O-methyltransferase of Sinorhizobium fredii (strain NBRC 101917 / NGR234).